A 369-amino-acid chain; its full sequence is Delta(12)-oleate desaturase (369 aa).

Transmembrane regions (helical) follow at residues Leu-41–Leu-61 and Ile-69–Ala-89. The short motif at His-90–His-94 is the Histidine box-1 element. The helical transmembrane segment at Leu-102–Trp-122 threads the bilayer. The Histidine box-2 motif lies at His-126–His-130. 3 helical membrane passes run Leu-164 to Ser-184, Trp-207 to Ile-227, and Phe-234 to Ile-254. Residues His-300–His-304 carry the Histidine box-3 motif.

This sequence belongs to the fatty acid desaturase type 1 family.

It localises to the membrane. It participates in lipid metabolism; polyunsaturated fatty acid biosynthesis. In terms of biological role, delta(12)-fatty acid desaturase producing in a heterologous system linoleic acid (18:2(9Z,12Z)) and to a lower extent hexadecadienoic acid (16:2(9Z,12Z)). This Trichosanthes kirilowii (Chinese snake gourd) protein is Delta(12)-oleate desaturase.